The chain runs to 88 residues: Class II hydrophobin 5 (88 aa).

An N-terminal signal peptide occupies residues 1 to 14; that stretch reads MQFLVLALASLAAA. Intrachain disulfides connect cysteine 27-cysteine 73, cysteine 35-cysteine 64, cysteine 36-cysteine 48, and cysteine 74-cysteine 85.

This sequence belongs to the cerato-ulmin hydrophobin family. As to quaternary structure, homotetramer. Further self-assembles to form highly ordered films at water-air interfaces through intermolecular interactions. In terms of tissue distribution, only appears on young aerial hyphae. HCf-5 is the most abundant transcript in sporulating mycelium.

It localises to the secreted. The protein localises to the cell wall. Functionally, aerial growth, conidiation, and dispersal of filamentous fungi in the environment rely upon a capability of their secreting small amphipathic proteins called hydrophobins (HPBs) with low sequence identity. Class I can self-assemble into an outermost layer of rodlet bundles on aerial cell surfaces, conferring cellular hydrophobicity that supports fungal growth, development and dispersal; whereas Class II form highly ordered films at water-air interfaces through intermolecular interactions but contribute nothing to the rodlet structure. This Passalora fulva (Tomato leaf mold) protein is Class II hydrophobin 5.